We begin with the raw amino-acid sequence, 159 residues long: Transcription elongation factor GreA (159 aa).

Residues 47–73 (AEYDAAREEQSLTEAHIADLENKLSTA) adopt a coiled-coil conformation.

This sequence belongs to the GreA/GreB family.

Functionally, necessary for efficient RNA polymerase transcription elongation past template-encoded arresting sites. The arresting sites in DNA have the property of trapping a certain fraction of elongating RNA polymerases that pass through, resulting in locked ternary complexes. Cleavage of the nascent transcript by cleavage factors such as GreA or GreB allows the resumption of elongation from the new 3'terminus. GreA releases sequences of 2 to 3 nucleotides. This chain is Transcription elongation factor GreA, found in Chlorobium phaeobacteroides (strain DSM 266 / SMG 266 / 2430).